Here is a 917-residue protein sequence, read N- to C-terminus: GTPase-activating Rap/Ran-GAP domain-like protein 3 (917 aa).

A Rap-GAP domain is found at 185-401 (LLVLEEQEGS…RTLDMLIRSL (217 aa)). The 310-residue stretch at 483–792 (PHEVVCADSW…QLVASRSDIY (310 aa)) folds into the CNH domain.

The protein belongs to the GARNL3 family.

In Gallus gallus (Chicken), this protein is GTPase-activating Rap/Ran-GAP domain-like protein 3 (GARNL3).